The chain runs to 298 residues: MDSKRLRIAMQKSGRLSQDSQELLKSCGFKINLREDRLIAHVENMPIDILRVRDDDIPGLVMDKVVDLGIVGENVLEETMLERQSQGLPTSYKKLKDLDYGGCRLSLAIPREEEWTGVAALQGKKIATTYPHLLKRFLAEQGVTFKPVLLTGSVEVAPRAGLAEAICDLVSSGATLEANGLKEVQVIYRSKASLIQADTELYPEKQKLVDRLMPRLEGMLQARESKYIMMHAPKDKLAEITALLPGAENPTVMPLASDSTHVAMHVVATETLFWETMEKLKALGASSILVLPIEKMMM.

The protein belongs to the ATP phosphoribosyltransferase family. Long subfamily. It depends on Mg(2+) as a cofactor.

It localises to the cytoplasm. The enzyme catalyses 1-(5-phospho-beta-D-ribosyl)-ATP + diphosphate = 5-phospho-alpha-D-ribose 1-diphosphate + ATP. Its pathway is amino-acid biosynthesis; L-histidine biosynthesis; L-histidine from 5-phospho-alpha-D-ribose 1-diphosphate: step 1/9. Its activity is regulated as follows. Feedback inhibited by histidine. Functionally, catalyzes the condensation of ATP and 5-phosphoribose 1-diphosphate to form N'-(5'-phosphoribosyl)-ATP (PR-ATP). Has a crucial role in the pathway because the rate of histidine biosynthesis seems to be controlled primarily by regulation of HisG enzymatic activity. In Tolumonas auensis (strain DSM 9187 / NBRC 110442 / TA 4), this protein is ATP phosphoribosyltransferase.